A 295-amino-acid chain; its full sequence is Probable deoxyhypusine synthase (295 aa).

Lysine 267 acts as the Nucleophile in catalysis.

This sequence belongs to the deoxyhypusine synthase family. The cofactor is NAD(+).

The enzyme catalyses [eIF5A protein]-L-lysine + spermidine = [eIF5A protein]-deoxyhypusine + propane-1,3-diamine. It participates in protein modification; eIF5A hypusination. In terms of biological role, catalyzes the NAD-dependent oxidative cleavage of spermidine and the subsequent transfer of the butylamine moiety of spermidine to the epsilon-amino group of a specific lysine residue of the eIF-5A precursor protein to form the intermediate deoxyhypusine residue. This Pyrobaculum calidifontis (strain DSM 21063 / JCM 11548 / VA1) protein is Probable deoxyhypusine synthase.